The primary structure comprises 321 residues: Tetraacyldisaccharide 4'-kinase (321 aa).

54 to 61 is an ATP binding site; sequence SVGGTGKT.

The protein belongs to the LpxK family.

It catalyses the reaction a lipid A disaccharide + ATP = a lipid IVA + ADP + H(+). The protein operates within glycolipid biosynthesis; lipid IV(A) biosynthesis; lipid IV(A) from (3R)-3-hydroxytetradecanoyl-[acyl-carrier-protein] and UDP-N-acetyl-alpha-D-glucosamine: step 6/6. Its function is as follows. Transfers the gamma-phosphate of ATP to the 4'-position of a tetraacyldisaccharide 1-phosphate intermediate (termed DS-1-P) to form tetraacyldisaccharide 1,4'-bis-phosphate (lipid IVA). This chain is Tetraacyldisaccharide 4'-kinase, found in Rickettsia conorii (strain ATCC VR-613 / Malish 7).